The primary structure comprises 847 residues: Alanine--tRNA ligase (847 aa).

Zn(2+) is bound by residues His554, His558, Cys656, and His660.

The protein belongs to the class-II aminoacyl-tRNA synthetase family. The cofactor is Zn(2+).

The protein localises to the cytoplasm. The enzyme catalyses tRNA(Ala) + L-alanine + ATP = L-alanyl-tRNA(Ala) + AMP + diphosphate. In terms of biological role, catalyzes the attachment of alanine to tRNA(Ala) in a two-step reaction: alanine is first activated by ATP to form Ala-AMP and then transferred to the acceptor end of tRNA(Ala). Also edits incorrectly charged Ser-tRNA(Ala) and Gly-tRNA(Ala) via its editing domain. This chain is Alanine--tRNA ligase, found in Helicobacter pylori (strain ATCC 700392 / 26695) (Campylobacter pylori).